We begin with the raw amino-acid sequence, 110 residues long: UPF0122 protein BcerKBAB4_3669 (110 aa).

The protein belongs to the UPF0122 family.

Functionally, might take part in the signal recognition particle (SRP) pathway. This is inferred from the conservation of its genetic proximity to ftsY/ffh. May be a regulatory protein. The polypeptide is UPF0122 protein BcerKBAB4_3669 (Bacillus mycoides (strain KBAB4) (Bacillus weihenstephanensis)).